A 571-amino-acid polypeptide reads, in one-letter code: Septation ring formation regulator EzrA (571 aa).

Residues 1–3 (MYY) lie on the Extracellular side of the membrane. A helical membrane pass occupies residues 4-22 (MLIGFIIVVIAVIGAGYIL). The Cytoplasmic portion of the chain corresponds to 23–571 (KRKHYQRINE…ESKVSVDDIE (549 aa)). Coiled coils occupy residues 248–298 (LAQM…DTLE), 326–374 (DALA…ASGE), 400–437 (KFAEELRSLRKDELEARDDAERMRRAIITLDRKMERER), and 478–529 (RIAE…ENHF).

Belongs to the EzrA family.

Its subcellular location is the cell membrane. In terms of biological role, negative regulator of FtsZ ring formation; modulates the frequency and position of FtsZ ring formation. Inhibits FtsZ ring formation at polar sites. Interacts either with FtsZ or with one of its binding partners to promote depolymerization. The sequence is that of Septation ring formation regulator EzrA from Listeria monocytogenes serotype 4b (strain CLIP80459).